A 1043-amino-acid polypeptide reads, in one-letter code: MGEVSLIGITAILCQKTDGFWKNIDDSLCRLEVLKSNIDSKFRLVAISTDNRCIFNKWVRTNSEITKCSDLFLEIKQVSSQSSNVEYFGVNFAYKPEVDKFYACFSKCIETLQTQRRQSTLNIQALQINNELQQQLQQQQQLPPIDQLPPPPTSTSTSTISNANISISNSISYDSLHQMASGITLEDLPPPPPSASSLILNNNTPLDLTSLPPIDFSNLPPPPTGLMTSRSSLTEANGLEIKNKLSPLLNGGASGLSSSPPPTTESKNQLNSSSGSNNSSSAPHLTDLFLPTNNNNSSGNQSASNSSPTSQYHQSQPNLQQYGTAPLTASSKLLQQQQQQQQQQQQNIIMTTTTTTTTTINIKTGSSSDSFLKTASGRRSIRVRHSTNQAADQQKKTMGRKDGLAVSLQNVEGLQNIAENLEDETLNLLDLVNEQVVTPEISNNAHLNQSLMKIFEHLQVLFILTGQASTHPGGKLITQVVNKLGRGPQASEFFSGKSVDGGYQWYNLDEVKDSVIGIHNLLALKKNLITAIAHLSTCVRVLGLQASLEIDWMSRNKSSETEKIVVQLACLTRELISSMSRLLAATVTYCYVCSSIAFIRNQQHSASADHNQASIQNRIRSPSTIDTINIWDELKTIKTIPTVPKDGSILKVTLNQLVLMLTSETSYDSKFLKTFITTYQSFASPGVLFTKLIERFYVPEWYSTVPTKISTIQQKVIVVLKYWIENQSSDFDQDVIDQIYFFINNLANSNEGYSELSRLLRGLLDKMIQDREVKFELLFQMPPRISFEEDSILSPIELFSEWSAQSIAQQLTLIDFSIFKDLEARELLNQNFNKPKLKYKSPTIMRMISKSTQFSFWVAYVILMEPKKEKRIKIFEKFCEVGKYLLKMNNFNSLMGLNAGLNLTCVHRLKKTKKKLSSSAISILTELERIFSSKKSFKNYRDHLSTVQLPCIPYLGFNLTDITFIEEGNTDNISSTDPAAANIGPLINFKKRELLYQAWADLSRFQETPYTFQPEEPLNTFLLNFPILDDKELYDLSIALEPK.

Positions isoleucine 109–leucine 142 form a coiled coil. Composition is skewed to low complexity over residues glutamine 135–isoleucine 145, leucine 245–serine 258, serine 266–serine 281, and asparagine 293–serine 307. 2 disordered regions span residues glutamine 135–isoleucine 160 and leucine 245–glutamine 316. Residues leucine 404 to glutamate 434 adopt a coiled-coil conformation. Residues lysine 645–isoleucine 768 enclose the N-terminal Ras-GEF domain. Residues serine 803–lysine 1043 enclose the Ras-GEF domain.

In terms of biological role, promotes the exchange of Ras-bound GDP by GTP. The polypeptide is Ras guanine nucleotide exchange factor S (gefS) (Dictyostelium discoideum (Social amoeba)).